A 442-amino-acid chain; its full sequence is D-serine dehydratase (442 aa).

Residue K118 is modified to N6-(pyridoxal phosphate)lysine.

It belongs to the serine/threonine dehydratase family. DsdA subfamily. As to quaternary structure, monomer. It depends on pyridoxal 5'-phosphate as a cofactor.

The enzyme catalyses D-serine = pyruvate + NH4(+). The polypeptide is D-serine dehydratase (Escherichia coli (strain 55989 / EAEC)).